A 507-amino-acid polypeptide reads, in one-letter code: Cytochrome P450 52A7 (507 aa).

The chain crosses the membrane as a helical span at residues 6 to 26 (LHYWYYVLPAFIIFHWIVSAI). Cysteine 456 is a heme binding site.

It belongs to the cytochrome P450 family. The cofactor is heme.

It is found in the membrane. In terms of biological role, together with an NADPH cytochrome P450 the enzyme system catalyzes the terminal hydroxylation as the first step in the assimilation of alkanes and fatty acids. Preferentially hydroxylates lauric acid. The chain is Cytochrome P450 52A7 (CYP52A7) from Candida tropicalis (Yeast).